The following is a 225-amino-acid chain: Phosphoserine phosphatase (225 aa).

Residue M1 is modified to N-acetylmethionine. The active-site Nucleophile is the D20. Residues D20 and D22 each contribute to the Mg(2+) site. Position 20–22 (20–22 (DVD)) interacts with L-serine. The active-site Proton donor is D22. M52 is a binding site for O-phospho-L-serine. G53 provides a ligand contact to phosphate. L-serine-binding positions include 109–111 (SGG) and K158. O-phospho-L-serine is bound by residues 109 to 111 (SGG) and K158. Position 179 (D179) interacts with Mg(2+). T182 contributes to the O-phospho-L-serine binding site. Phosphate is bound at residue T182.

This sequence belongs to the HAD-like hydrolase superfamily. SerB family. As to quaternary structure, homodimer. It depends on Mg(2+) as a cofactor.

It localises to the cytoplasm. The protein resides in the cytosol. The catalysed reaction is O-phospho-L-serine + H2O = L-serine + phosphate. It catalyses the reaction O-phospho-D-serine + H2O = D-serine + phosphate. Its pathway is amino-acid biosynthesis; L-serine biosynthesis; L-serine from 3-phospho-D-glycerate: step 3/3. In terms of biological role, catalyzes the last irreversible step in the biosynthesis of L-serine from carbohydrates, the dephosphorylation of O-phospho-L-serine to L-serine. L-serine can then be used in protein synthesis, to produce other amino acids, in nucleotide metabolism or in glutathione synthesis, or can be racemized to D-serine, a neuromodulator. May also act on O-phospho-D-serine. In Mus musculus (Mouse), this protein is Phosphoserine phosphatase.